The chain runs to 334 residues: Formamidase (334 aa).

The region spanning 14–260 (FLVAAIQFPV…WEIVTGEIYP (247 aa)) is the CN hydrolase domain. Glutamate 60 (proton acceptor) is an active-site residue. Lysine 133 acts as the Proton donor in catalysis. Cysteine 166 acts as the Nucleophile in catalysis.

Belongs to the carbon-nitrogen hydrolase superfamily. Aliphatic amidase family.

The enzyme catalyses formamide + H2O = formate + NH4(+). Its function is as follows. Is an aliphatic amidase with a restricted substrate specificity, as it only hydrolyzes formamide. In Helicobacter pylori (strain G27), this protein is Formamidase.